The chain runs to 206 residues: Ribosomal RNA large subunit methyltransferase E (206 aa).

The S-adenosyl-L-methionine site is built by Gly60, Trp62, Asp80, Asp96, and Asp121. Lys161 serves as the catalytic Proton acceptor.

The protein belongs to the class I-like SAM-binding methyltransferase superfamily. RNA methyltransferase RlmE family.

The protein localises to the cytoplasm. The enzyme catalyses uridine(2552) in 23S rRNA + S-adenosyl-L-methionine = 2'-O-methyluridine(2552) in 23S rRNA + S-adenosyl-L-homocysteine + H(+). In terms of biological role, specifically methylates the uridine in position 2552 of 23S rRNA at the 2'-O position of the ribose in the fully assembled 50S ribosomal subunit. The sequence is that of Ribosomal RNA large subunit methyltransferase E from Francisella tularensis subsp. novicida (strain U112).